The following is a 276-amino-acid chain: uncharacterized protein (276 aa).

The segment at 1-70 (MSKAKSPIKS…SDDDEEDSPN (70 aa)) is disordered. Basic and acidic residues predominate over residues 21–35 (VLREKKVKDAEKAEH). Residues 105–183 (GVLYVGRLPH…KLLQCKVIPE (79 aa)) enclose the RRM domain. Residues 249–276 (VSHPKAASPVASKKSSKKKNKKVLAAHK) are disordered. The segment covering 252–261 (PKAASPVASK) has biased composition (low complexity). A compositionally biased stretch (basic residues) spans 262-276 (KSSKKKNKKVLAAHK).

It localises to the nucleus. Its subcellular location is the nucleolus. This is an uncharacterized protein from Schizosaccharomyces pombe (strain 972 / ATCC 24843) (Fission yeast).